Consider the following 957-residue polypeptide: Glycine dehydrogenase (decarboxylating) (957 aa).

Lysine 708 is modified (N6-(pyridoxal phosphate)lysine).

This sequence belongs to the GcvP family. As to quaternary structure, the glycine cleavage system is composed of four proteins: P, T, L and H. It depends on pyridoxal 5'-phosphate as a cofactor.

The enzyme catalyses N(6)-[(R)-lipoyl]-L-lysyl-[glycine-cleavage complex H protein] + glycine + H(+) = N(6)-[(R)-S(8)-aminomethyldihydrolipoyl]-L-lysyl-[glycine-cleavage complex H protein] + CO2. In terms of biological role, the glycine cleavage system catalyzes the degradation of glycine. The P protein binds the alpha-amino group of glycine through its pyridoxal phosphate cofactor; CO(2) is released and the remaining methylamine moiety is then transferred to the lipoamide cofactor of the H protein. The sequence is that of Glycine dehydrogenase (decarboxylating) from Escherichia coli (strain SE11).